Here is a 306-residue protein sequence, read N- to C-terminus: MPFLELTLRCTEATQPRYENALEDVGALAVTLLDAEADTSNEQAILEPGVGETPLWDTLVLSALFPADSNALLLLAALEAFDPELDWSSGSFRAVEDEDWERAWLDQFQPMAFGSRTWIVPWNHELPEAAQAADAAVVRLDPGLAFGSGTHPTTALCLRWLDQLAVDGLLQGQRVLDFGCGSGILALAALKLGAAEAIGVDNDPQALVATADNAERNGEQARMHVYLPPDEPVATYPIVVANILASALDALAELLAARVAAGGRIALSGILHGQEGELLQRYAEWFDDLQATQDGDWMRITGVRRA.

Residues T154, G179, D201, and N242 each contribute to the S-adenosyl-L-methionine site.

This sequence belongs to the methyltransferase superfamily. PrmA family.

Its subcellular location is the cytoplasm. The catalysed reaction is L-lysyl-[protein] + 3 S-adenosyl-L-methionine = N(6),N(6),N(6)-trimethyl-L-lysyl-[protein] + 3 S-adenosyl-L-homocysteine + 3 H(+). Methylates ribosomal protein L11. The protein is Ribosomal protein L11 methyltransferase of Stenotrophomonas maltophilia (strain K279a).